Consider the following 1101-residue polypeptide: Furin-like protease 1, isoform 1-CRR (1101 aa).

The tract at residues 1–57 (MKNDVVRWSRQPTSNTTNSSSSSRSDSNSTHKHRSKSNKLNARQLGSNAARSCQQRS) is disordered. Residues 13 to 28 (TSNTTNSSSSSRSDSN) are compositionally biased toward low complexity. Asparagine 15, asparagine 18, and asparagine 28 each carry an N-linked (GlcNAc...) asparagine glycan. Polar residues predominate over residues 38–57 (NKLNARQLGSNAARSCQQRS). Asparagine 108 is a glycosylation site (N-linked (GlcNAc...) asparagine). A helical transmembrane segment spans residues 119 to 139 (VFLLALQFSAVVFLCNINVGF). Positions 150-163 (SAGGSSPAAPSSAP) are enriched in low complexity. A disordered region spans residues 150–187 (SAGGSSPAAPSSAPSSPPTVAVPPPPPPSSALKVDPNG). Residues 164-178 (SSPPTVAVPPPPPPS) show a composition bias toward pro residues. Asparagine 333 is a glycosylation site (N-linked (GlcNAc...) asparagine). The region spanning 340–654 (MWYLNRGGGL…YGLMDAAEMV (315 aa)) is the Peptidase S8 domain. Active-site charge relay system residues include aspartate 372 and histidine 413. An N-linked (GlcNAc...) asparagine glycan is attached at asparagine 426. Intrachain disulfides connect cysteine 430–cysteine 579 and cysteine 522–cysteine 552. Residue serine 587 is the Charge relay system of the active site. Asparagine 606 is a glycosylation site (N-linked (GlcNAc...) asparagine). In terms of domain architecture, P/Homo B spans 662-791 (AVPEQQRCEI…DMIFYGTETP (130 aa)). Residues cysteine 669 and cysteine 695 are joined by a disulfide bond. 2 N-linked (GlcNAc...) asparagine glycosylation sites follow: asparagine 727 and asparagine 859. Positions 886-915 (EEDEQDDEVTRGPVNPYSSSPMDHSLLMSN) are disordered. Residues 901–915 (PYSSSPMDHSLLMSN) are compositionally biased toward polar residues. N-linked (GlcNAc...) asparagine glycosylation is present at asparagine 978. Residues 1014 to 1034 (TVLLLVSVIFTLMGVAVAGGI) traverse the membrane as a helical segment.

Belongs to the peptidase S8 family. Furin subfamily. The cofactor is Ca(2+). As to expression, in adults, isoform 1-CRR is expressed in CNS, fat body, and female reproductive tissues, and in embryos, in anal pads, hindgut, developing antennomaxillary complex, oenocytes, clipeolabrum, pharynx, trachea, CNS and developing posterior spiracles.

It localises to the golgi apparatus membrane. It catalyses the reaction Release of mature proteins from their proproteins by cleavage of -Arg-Xaa-Yaa-Arg-|-Zaa- bonds, where Xaa can be any amino acid and Yaa is Arg or Lys. Releases albumin, complement component C3 and von Willebrand factor from their respective precursors.. Furin is likely to represent the ubiquitous endoprotease activity within constitutive secretory pathways and capable of cleavage at the RX(K/R)R consensus motif. The chain is Furin-like protease 1, isoform 1-CRR (Fur1) from Drosophila melanogaster (Fruit fly).